The chain runs to 563 residues: Tripeptidyl-peptidase 1 (563 aa).

A signal peptide spans 1–19 (MGLQACLLGLFALILSGKC). Positions 20–195 (SYSPEPDQRR…PEPQVTGTVG (176 aa)) are cleaved as a propeptide — removed in mature form. Residues C111 and C122 are joined by a disulfide bond. One can recognise a Peptidase S53 domain in the interval 199 to 563 (GVTPSVIRKR…PALLKTLLNP (365 aa)). N-linked (GlcNAc...) asparagine glycans are attached at residues N210 and N222. Catalysis depends on charge relay system residues E272 and D276. N286, N313, and N443 each carry an N-linked (GlcNAc...) asparagine glycan. 2 disulfide bridges follow: C365-C526 and C522-C537. S475 functions as the Charge relay system in the catalytic mechanism. Residues D517 and V518 each coordinate Ca(2+). Ca(2+) is bound by residues G539, G541, and D543.

In terms of assembly, monomer. Interacts with CLN5. Interacts with CLN3. Ca(2+) is required as a cofactor. Post-translationally, activated by autocatalytic proteolytical processing upon acidification. N-glycosylation is required for processing and activity.

Its subcellular location is the lysosome. The protein localises to the melanosome. The catalysed reaction is Release of an N-terminal tripeptide from a polypeptide, but also has endopeptidase activity.. Lysosomal serine protease with tripeptidyl-peptidase I activity. May act as a non-specific lysosomal peptidase which generates tripeptides from the breakdown products produced by lysosomal proteinases. Requires substrates with an unsubstituted N-terminus. The chain is Tripeptidyl-peptidase 1 (TPP1) from Macaca fascicularis (Crab-eating macaque).